A 370-amino-acid chain; its full sequence is Phosphate-binding protein PstS 2 (370 aa).

A signal peptide spans 1 to 22 (MKFARSGAAVSLLAAGTLVLTA). Residue cysteine 23 is the site of N-palmitoyl cysteine attachment. Cysteine 23 is lipidated: S-diacylglycerol cysteine. Phosphate contacts are provided by residues 54 to 56 (STA), serine 84, aspartate 102, and 191 to 193 (SGT).

It belongs to the PstS family. The complex is composed of two ATP-binding proteins (PstB), two transmembrane proteins (PstC and PstA) and a solute-binding protein (PstS).

It is found in the cell membrane. Functionally, functions in inorganic phosphate uptake, although probably not the main uptake protein under phosphate starvation. Part of the ABC transporter complex PstSACB involved in phosphate import. This Mycobacterium tuberculosis (strain ATCC 25618 / H37Rv) protein is Phosphate-binding protein PstS 2 (pstS2).